Reading from the N-terminus, the 157-residue chain is Ribosomal RNA large subunit methyltransferase H (157 aa).

S-adenosyl-L-methionine is bound by residues Leu73, Gly104, and 123–128 (LGPLTL).

Belongs to the RNA methyltransferase RlmH family. As to quaternary structure, homodimer.

It is found in the cytoplasm. It carries out the reaction pseudouridine(1915) in 23S rRNA + S-adenosyl-L-methionine = N(3)-methylpseudouridine(1915) in 23S rRNA + S-adenosyl-L-homocysteine + H(+). Functionally, specifically methylates the pseudouridine at position 1915 (m3Psi1915) in 23S rRNA. The polypeptide is Ribosomal RNA large subunit methyltransferase H (Xylella fastidiosa (strain M12)).